We begin with the raw amino-acid sequence, 390 residues long: MTQVHFTLKSEEIQSIIEYSVKDDVSKNILTTVFNQLMENQRTEYIQAKEYERTENRQSQRNGYYERSFTTRVGTLELKVPRTRDGHFSPTVFERYQRNEKALMASMLEMYVSGVSTRKVSKIVEELCGKSVSKSFVSSLTEQLEPMVNEWQNRLLSEKNYPYLMTDVLYIKVREENRVLSKSCHIAIGITKDGDREIIGFMIQSGESEETWTTFFEYLKERGLQGTELVISDAHKGLVSAIRKSFTNVSWQRCQVHFLRNIFTTIPKKNSKSFREAVKGIFKFTDINLAREAKNRLIHDYIDQPKYSKACASLDDGFEDAFQYTVQGNSHNRLKSTNLIERLNQEVRRREKIIRIFPNQTSANRLIGAVLMDLHDEWIYSSRKYINFDK.

This sequence belongs to the transposase mutator family.

Required for the transposition of the insertion element. This Enterococcus faecalis (strain ATCC 700802 / V583) protein is Transposase for insertion sequence element IS256 in transposon Tn4001.